Consider the following 169-residue polypeptide: CKLF-like MARVEL transmembrane domain-containing protein 2A (169 aa).

4 helical membrane-spanning segments follow: residues 40-60 (FWLS…ISAL), 69-89 (HPVL…FIFL), 98-118 (IPFV…CVFL), and 136-156 (YLTA…DMLL). Residues 40–162 (FWLSGHAVFK…DMLLQFQHFR (123 aa)) form the MARVEL domain.

The protein belongs to the chemokine-like factor family.

The protein resides in the membrane. In Mus musculus (Mouse), this protein is CKLF-like MARVEL transmembrane domain-containing protein 2A (Cmtm2a).